The following is a 320-amino-acid chain: Heterogeneous nuclear ribonucleoprotein A1-like 3 (320 aa).

RRM domains follow at residues 14-97 (RKLF…DSQR) and 105-184 (KKIF…LSKQ). 2 disordered regions span residues 182 to 218 (SKQE…NFGR) and 271 to 320 (SNFG…GRRF). A compositionally biased stretch (gly residues) spans 197-218 (SGSGNFGGGRGGGFGGNDNFGR). The segment covering 308 to 320 (SSSSSSYGSGRRF) has biased composition (low complexity).

The polypeptide is Heterogeneous nuclear ribonucleoprotein A1-like 3 (Homo sapiens (Human)).